The sequence spans 265 residues: Hydroxyethylthiazole kinase (265 aa).

A substrate-binding site is contributed by Met-36. Lys-112 and Ser-160 together coordinate ATP. Gly-187 serves as a coordination point for substrate.

The protein belongs to the Thz kinase family. The cofactor is Mg(2+).

It carries out the reaction 5-(2-hydroxyethyl)-4-methylthiazole + ATP = 4-methyl-5-(2-phosphooxyethyl)-thiazole + ADP + H(+). The protein operates within cofactor biosynthesis; thiamine diphosphate biosynthesis; 4-methyl-5-(2-phosphoethyl)-thiazole from 5-(2-hydroxyethyl)-4-methylthiazole: step 1/1. Catalyzes the phosphorylation of the hydroxyl group of 4-methyl-5-beta-hydroxyethylthiazole (THZ). In Clostridium perfringens (strain SM101 / Type A), this protein is Hydroxyethylthiazole kinase.